The following is a 619-amino-acid chain: Chaperone protein HscA homolog (619 aa).

It belongs to the heat shock protein 70 family.

In terms of biological role, chaperone involved in the maturation of iron-sulfur cluster-containing proteins. Has a low intrinsic ATPase activity which is markedly stimulated by HscB. The sequence is that of Chaperone protein HscA homolog from Haemophilus influenzae (strain PittEE).